The following is a 259-amino-acid chain: Probable iron export permease protein FetB (259 aa).

Over 1 to 5 (MNSHN) the chain is Periplasmic. A helical transmembrane segment spans residues 6 to 26 (ITNESLALALMLVVVAILISH). Residues 27-35 (KEKLALEKD) are Cytoplasmic-facing. The next 2 membrane-spanning stretches (helical) occupy residues 36-56 (ILWS…VLKY) and 57-77 (IFSV…CFNA). Topologically, residues 78 to 91 (AWNAQKRSKYIAKA) are cytoplasmic. Residues 92–112 (FISSFIAITVGAGITLAVLIL) form a helical membrane-spanning segment. At 113 to 117 (SGSIE) the chain is on the periplasmic side. Residues 118-138 (FIPMQVIPIAGMIAGNAMVAV) form a helical membrane-spanning segment. Residues 139–191 (GLCYNNLGQRVISEQQQIQEKLSLGATPKQASAILIRDSIRAALIPTVDSAKT) lie on the Cytoplasmic side of the membrane. The chain crosses the membrane as a helical span at residues 192-212 (VGLVSLPGMMSGLIFAGIDPV). Residues 213–218 (KAIKYQ) lie on the Periplasmic side of the membrane. Residues 219 to 239 (IMVTFMLLSTASLSTIIACYL) form a helical membrane-spanning segment. Residues 240-259 (TYRKFYNSRHQLVVTQLKKK) lie on the Cytoplasmic side of the membrane.

The protein belongs to the UPF0014 family. The complex is composed of two ATP-binding proteins (FetA) and two transmembrane proteins (FetB).

The protein resides in the cell inner membrane. Its function is as follows. Part of the ABC transporter complex FetAB, which is probably involved in iron export and enhances resistance to H(2)O(2)-mediated oxidative stress. Probably responsible for the translocation of the substrate across the membrane. This is Probable iron export permease protein FetB (fetB) from Escherichia coli (strain K12).